Reading from the N-terminus, the 859-residue chain is Probable potassium transporter 14 (859 aa).

Over residues 1–19 (METRSGGSGSASGGGGGGR) the composition is skewed to gly residues. Positions 1-69 (METRSGGSGS…SRGGCSDSDD (69 aa)) are disordered. At 1-112 (METRSGGSGS…RHQEITVGRS (112 aa)) the chain is on the cytoplasmic side. Positions 54–65 (PAAASGSRGGCS) are enriched in low complexity. A helical transmembrane segment spans residues 113 to 133 (IVLAVQTLGVVFGDVGTSPLY). At 134 to 155 (AFDVMFNKYPITSKEDVLGALS) the chain is on the extracellular side. A helical membrane pass occupies residues 156–176 (LVIYTLILIPLLKYTLIALWG). The Cytoplasmic portion of the chain corresponds to 177–240 (NDDGEGGTFA…RLETSSMLKK (64 aa)). A helical membrane pass occupies residues 241 to 261 (LLLMLVLFGTSMVIADGVVTP). At 262 to 275 (AMSVMSAVNGLKVG) the chain is on the extracellular side. A helical transmembrane segment spans residues 276–296 (ISSVNEGEVVMITVAVLIVLF). Topologically, residues 297 to 305 (TLQRFGSSK) are cytoplasmic. Residues 306-326 (VALAVGPALFIWFCCLAGIGI) form a helical membrane-spanning segment. Over 327 to 359 (YNMKTYGSAVLQAFNPMYIYYYFERNPTQAWMS) the chain is Extracellular. A helical transmembrane segment spans residues 360-380 (LGGCLLCATGSEAMFADLCYF). The Cytoplasmic segment spans residues 381-388 (SVKSVQLT). A helical transmembrane segment spans residues 389 to 409 (FVFLVLPCLLLGYLGQAAFLM). Residues 410–417 (ENLTENQQ) are Extracellular-facing. Asn411 carries N-linked (GlcNAc...) asparagine glycosylation. A helical transmembrane segment spans residues 418–438 (VFFLSIPNQAFWPVVFIAILA). Topologically, residues 439–478 (AIIASRTMTTAIFSTIKQATALGCFPRLKIIHTSRSFMGQ) are cytoplasmic. A helical transmembrane segment spans residues 479-499 (IYIPMMNWFLLVSCLAFVTMF). Over 500-508 (GSINEIGNA) the chain is Extracellular. A helical transmembrane segment spans residues 509-531 (YGIAELGVMMMTTVLVTIIMLLI). The Cytoplasmic portion of the chain corresponds to 532 to 535 (WQIN). A helical membrane pass occupies residues 536 to 558 (IIVVLCFLTLSLGLELIFFSSVL). Residues 559–560 (GS) lie on the Extracellular side of the membrane. The helical transmembrane segment at 561–581 (VADGSWVLLVFAAVLYLIMYI) threads the bilayer. Residues 582–859 (WNYGTKLKYE…MMQVAMQYMV (278 aa)) lie on the Cytoplasmic side of the membrane. The interval 752 to 772 (GVPPAEAAGTTEHPTIGSSMS) is disordered. Positions 763-772 (EHPTIGSSMS) are enriched in polar residues.

Belongs to the HAK/KUP transporter (TC 2.A.72.3) family.

The protein resides in the membrane. Its function is as follows. High-affinity potassium transporter. The polypeptide is Probable potassium transporter 14 (HAK14) (Oryza sativa subsp. japonica (Rice)).